The following is a 241-amino-acid chain: Uracil-DNA glycosylase (241 aa).

Catalysis depends on Asp71, which acts as the Proton acceptor. The interval 221–241 (ISPIDWSLPPRNELDTTSAGA) is disordered.

It belongs to the uracil-DNA glycosylase (UDG) superfamily. UNG family.

The protein localises to the cytoplasm. The enzyme catalyses Hydrolyzes single-stranded DNA or mismatched double-stranded DNA and polynucleotides, releasing free uracil.. Functionally, excises uracil residues from the DNA which can arise as a result of misincorporation of dUMP residues by DNA polymerase or due to deamination of cytosine. The chain is Uracil-DNA glycosylase from Xanthomonas oryzae pv. oryzae (strain MAFF 311018).